Reading from the N-terminus, the 433-residue chain is 26S proteasome regulatory subunit 7 (433 aa).

Positions 1–22 (MPDYLGADQRKTKEDEKDDKPI) are disordered. A compositionally biased stretch (basic and acidic residues) spans 8–22 (DQRKTKEDEKDDKPI). Lysine 116 carries the post-translational modification N6-acetyllysine. 216-223 (GPPGTGKT) is a binding site for ATP. An N6-acetyllysine modification is found at lysine 422.

It belongs to the AAA ATPase family. As to quaternary structure, component of the 19S proteasome regulatory particle complex. The 26S proteasome consists of a 20S core particle (CP) and two 19S regulatory subunits (RP). The regulatory particle is made of a lid composed of 9 subunits, a base containing 6 ATPases including PSMC2 and few additional components. Interacts with NDC80/HEC; this interaction is detected only during M phase. Interacts and SQSTM1. Interacts with PAAF1. Directly interacts with TRIM5. Post-translationally, monoubiquitinated by RNF181. In terms of processing, phosphorylated. Dephosphorylated by UBLCP1 which impairs PSMC2 ATPase activity and disrupts 26S proteasome assembly.

The protein localises to the cytoplasm. It is found in the nucleus. Component of the 26S proteasome, a multiprotein complex involved in the ATP-dependent degradation of ubiquitinated proteins. This complex plays a key role in the maintenance of protein homeostasis by removing misfolded or damaged proteins, which could impair cellular functions, and by removing proteins whose functions are no longer required. Therefore, the proteasome participates in numerous cellular processes, including cell cycle progression, apoptosis, or DNA damage repair. PSMC2 belongs to the heterohexameric ring of AAA (ATPases associated with diverse cellular activities) proteins that unfolds ubiquitinated target proteins that are concurrently translocated into a proteolytic chamber and degraded into peptides. The chain is 26S proteasome regulatory subunit 7 (PSMC2) from Bos taurus (Bovine).